The primary structure comprises 214 residues: Hypoxanthine-guanine phosphoribosyltransferase (214 aa).

Position 2 is an N-acetylalanine (A2). GMP is bound at residue K69. An N6-acetyllysine modification is found at K103. A Glycyl lysine isopeptide (Lys-Gly) (interchain with G-Cter in SUMO1); alternate cross-link involves residue K115. K115 participates in a covalent cross-link: Glycyl lysine isopeptide (Lys-Gly) (interchain with G-Cter in SUMO2); alternate. GMP is bound by residues 134 to 142 (EDIIDTGKT), K166, 186 to 188 (KFV), and D194. The active-site Proton acceptor is D138. T142 carries the phosphothreonine modification. Mg(2+) is bound at residue D194.

Belongs to the purine/pyrimidine phosphoribosyltransferase family. In terms of assembly, homotetramer. The cofactor is Mg(2+).

Its subcellular location is the cytoplasm. It catalyses the reaction IMP + diphosphate = hypoxanthine + 5-phospho-alpha-D-ribose 1-diphosphate. It carries out the reaction GMP + diphosphate = guanine + 5-phospho-alpha-D-ribose 1-diphosphate. It functions in the pathway purine metabolism; IMP biosynthesis via salvage pathway; IMP from hypoxanthine: step 1/1. In terms of biological role, converts guanine to guanosine monophosphate, and hypoxanthine to inosine monophosphate. Transfers the 5-phosphoribosyl group from 5-phosphoribosylpyrophosphate onto the purine. Plays a central role in the generation of purine nucleotides through the purine salvage pathway. This chain is Hypoxanthine-guanine phosphoribosyltransferase (Hprt1), found in Mus spretus (Western Mediterranean mouse).